We begin with the raw amino-acid sequence, 360 residues long: DNA replication and repair protein RecF (360 aa).

Position 30–37 (30–37 (GHNGSGKT)) interacts with ATP.

The protein belongs to the RecF family.

It localises to the cytoplasm. The RecF protein is involved in DNA metabolism; it is required for DNA replication and normal SOS inducibility. RecF binds preferentially to single-stranded, linear DNA. It also seems to bind ATP. The chain is DNA replication and repair protein RecF from Shewanella pealeana (strain ATCC 700345 / ANG-SQ1).